A 393-amino-acid polypeptide reads, in one-letter code: Zinc finger CCHC domain-containing protein 18 (393 aa).

Disordered stretches follow at residues 281-300 (VEPE…RGTA) and 313-341 (DDFD…RTRK). Composition is skewed to polar residues over residues 291–300 (PGASSLRGTA) and 320–331 (PSTSSGSGQRNN). Residues 346 to 363 (IRCPHCGEEGHAKETCDN) form a CCHC-type zinc finger.

It belongs to the ZCCHC12 family.

This Mus musculus (Mouse) protein is Zinc finger CCHC domain-containing protein 18.